Consider the following 321-residue polypeptide: High osmolarity signaling protein SHO1A (321 aa).

Topologically, residues 1-28 (MDYNNNRYGGGGGGSKFNLGHIVGDPFS) are cytoplasmic. A helical transmembrane segment spans residues 29 to 49 (LATIAIATAGWLIAFVSSIIA). Residues 50-58 (NIDQEYPNY) lie on the Extracellular side of the membrane. Residue N57 is glycosylated (N-linked (GlcNAc...) asparagine). The helical transmembrane segment at 59-79 (SWWALAYMFFVILGVTFAVAA) threads the bilayer. A topological domain (cytoplasmic) is located at residue N80. The chain crosses the membrane as a helical span at residues 81-101 (AVYTYHVAMVGFLAAGLVFTT). Residues 102-116 (SSVNSLIYWSDKAKQ) lie on the Extracellular side of the membrane. Residues 117–137 (AAAAGFILLSMVSIVWIFYFG) form a helical membrane-spanning segment. Over 138–321 (SQPTASHRQT…IAPSNYLILL (184 aa)) the chain is Cytoplasmic. 2 disordered regions span residues 155-181 (KDHA…AQHP) and 194-261 (TSSP…QQPT). Polar residues-rich tracts occupy residues 165-181 (HMTQ…AQHP) and 225-237 (NFSN…PITS). Low complexity predominate over residues 238–249 (QNNPQNQHQQPQ). Over residues 250–261 (DLTSPSTTQQPT) the composition is skewed to polar residues. The SH3 domain occupies 262–321 (EYPYRAKAIYSYEANPDDANEISFNKHEILEVSDVSGRWWQAKKENGETGIAPSNYLILL).

This sequence belongs to the SHO1 family. Forms homooligomers.

It is found in the cell membrane. In terms of biological role, plasma membrane osmosensor that activates the high osmolarity glycerol (HOG) MAPK signaling pathway in response to high osmolarity. This chain is High osmolarity signaling protein SHO1A (SHO1A), found in Hortaea werneckii.